A 419-amino-acid polypeptide reads, in one-letter code: tRNA(Ile)-lysidine synthase (419 aa).

25–30 is an ATP binding site; the sequence is SGGIDS.

This sequence belongs to the tRNA(Ile)-lysidine synthase family.

It localises to the cytoplasm. It catalyses the reaction cytidine(34) in tRNA(Ile2) + L-lysine + ATP = lysidine(34) in tRNA(Ile2) + AMP + diphosphate + H(+). Its function is as follows. Ligates lysine onto the cytidine present at position 34 of the AUA codon-specific tRNA(Ile) that contains the anticodon CAU, in an ATP-dependent manner. Cytidine is converted to lysidine, thus changing the amino acid specificity of the tRNA from methionine to isoleucine. The sequence is that of tRNA(Ile)-lysidine synthase from Actinobacillus pleuropneumoniae serotype 7 (strain AP76).